The sequence spans 297 residues: N-acetylneuraminate lyase (297 aa).

Positions 47 and 48 each coordinate aceneuramate. Tyr-137 serves as the catalytic Proton donor. The Schiff-base intermediate with substrate role is filled by Lys-165. Aceneuramate-binding residues include Thr-167, Gly-189, Asp-191, Glu-192, and Ser-208.

It belongs to the DapA family. NanA subfamily. Homotetramer.

The protein resides in the cytoplasm. It carries out the reaction aceneuramate = aldehydo-N-acetyl-D-mannosamine + pyruvate. It functions in the pathway amino-sugar metabolism; N-acetylneuraminate degradation; D-fructose 6-phosphate from N-acetylneuraminate: step 1/5. Functionally, catalyzes the reversible aldol cleavage of N-acetylneuraminic acid (sialic acid; Neu5Ac) to form pyruvate and N-acetylmannosamine (ManNAc) via a Schiff base intermediate. The chain is N-acetylneuraminate lyase from Escherichia coli O139:H28 (strain E24377A / ETEC).